Reading from the N-terminus, the 159-residue chain is SsrA-binding protein (159 aa).

Residues 131–159 (KGKKLHDKRESEKERDWNRQKSRLLKDNG) form a disordered region. Basic and acidic residues predominate over residues 137–159 (DKRESEKERDWNRQKSRLLKDNG).

The protein belongs to the SmpB family.

It is found in the cytoplasm. Required for rescue of stalled ribosomes mediated by trans-translation. Binds to transfer-messenger RNA (tmRNA), required for stable association of tmRNA with ribosomes. tmRNA and SmpB together mimic tRNA shape, replacing the anticodon stem-loop with SmpB. tmRNA is encoded by the ssrA gene; the 2 termini fold to resemble tRNA(Ala) and it encodes a 'tag peptide', a short internal open reading frame. During trans-translation Ala-aminoacylated tmRNA acts like a tRNA, entering the A-site of stalled ribosomes, displacing the stalled mRNA. The ribosome then switches to translate the ORF on the tmRNA; the nascent peptide is terminated with the 'tag peptide' encoded by the tmRNA and targeted for degradation. The ribosome is freed to recommence translation, which seems to be the essential function of trans-translation. This Rhizobium leguminosarum bv. trifolii (strain WSM2304) protein is SsrA-binding protein.